Consider the following 277-residue polypeptide: MEAMPCHNQRLGAAGGPRPQDEQTAPAGGCSRLIRFAEPSEGSSSGSPSPDSSSGSNGAAAAPSPAAEDCASPLGAQLKLLPMNDQIRELQTIIRDKTASRGDFVFSADRLIRLVVEERLNQLPYTECTVTTPTGYKYEGVKFEKGNCGVSIMRSGEAMEQGLRDCCRSIRIGKILIQSDEETQRAKVYYAKFPPDIYRRKVLLMYPILSTGNTVIEAVKVLIEHGVQPSVIILLSLFSTPHGAKSIIQEFPEITILTTEVHPVAPTHFGQKYFGTD.

Residues 1–69 are disordered; it reads MEAMPCHNQR…AAAPSPAAED (69 aa). Over residues 37-69 the composition is skewed to low complexity; that stretch reads AEPSEGSSSGSPSPDSSSGSNGAAAAPSPAAED. GTP contacts are provided by residues R101, R110, and 144–147; that span reads EKGN. R154 lines the 5-phospho-alpha-D-ribose 1-diphosphate pocket. The GTP site is built by R171 and R200. Position 206–214 (206–214) interacts with 5-phospho-alpha-D-ribose 1-diphosphate; the sequence is YPILSTGNT. Position 267-269 (267-269) interacts with uracil; that stretch reads THF.

This sequence belongs to the UPRTase family.

It is found in the cytoplasm. The protein resides in the nucleus. The sequence is that of Uracil phosphoribosyltransferase homolog (UPRT) from Gallus gallus (Chicken).